Reading from the N-terminus, the 260-residue chain is 3-dehydroquinate dehydratase (260 aa).

Residues 50–52 and Arg86 each bind 3-dehydroquinate; that span reads EWR. Catalysis depends on His148, which acts as the Proton donor/acceptor. The active-site Schiff-base intermediate with substrate is Lys175. Positions 217, 236, and 240 each coordinate 3-dehydroquinate.

The protein belongs to the type-I 3-dehydroquinase family. Homodimer.

The catalysed reaction is 3-dehydroquinate = 3-dehydroshikimate + H2O. The protein operates within metabolic intermediate biosynthesis; chorismate biosynthesis; chorismate from D-erythrose 4-phosphate and phosphoenolpyruvate: step 3/7. In terms of biological role, involved in the third step of the chorismate pathway, which leads to the biosynthesis of aromatic amino acids. Catalyzes the cis-dehydration of 3-dehydroquinate (DHQ) and introduces the first double bond of the aromatic ring to yield 3-dehydroshikimate. The chain is 3-dehydroquinate dehydratase from Aromatoleum aromaticum (strain DSM 19018 / LMG 30748 / EbN1) (Azoarcus sp. (strain EbN1)).